The chain runs to 89 residues: Arminin 375 (89 aa).

A signal peptide spans Met-1–Ala-18. A propeptide spanning residues Lys-19–Ala-57 is cleaved from the precursor. At Ala-86 the chain carries Alanine amide.

It belongs to the arminin family. Expressed in entodermal epithelium along the body column.

The protein resides in the secreted. It localises to the target cell membrane. In terms of biological role, antimicrobial peptide with a broad-spectrum antimicrobial activity. Keeps its antibacterial activity under a wide range of salt concentrations that mimic physiological conditions of human blood, which is surprising, since Hydra is an obligate freshwater animal with nearly no salt tolerance. Does not affect red blood cells. This Hydra oligactis (Brown hydra) protein is Arminin 375.